A 336-amino-acid polypeptide reads, in one-letter code: SCP domain-containing protein 1 (336 aa).

Residues M1–S18 form the signal peptide. N47 carries an N-linked (GlcNAc...) asparagine glycan. Residues Q73 to G85 are compositionally biased toward polar residues. Residues Q73–A94 are disordered. The SCP domain maps to L175–C292. N-linked (GlcNAc...) asparagine glycans are attached at residues N213 and N257.

In terms of tissue distribution, component of the acid-insoluble and acid-soluble organic matrix of calcified layers of the shell (at protein level).

The protein resides in the secreted. The sequence is that of SCP domain-containing protein 1 from Lottia gigantea (Giant owl limpet).